The sequence spans 519 residues: Probable cytochrome P450 6g2 (519 aa).

C460 is a heme binding site.

Belongs to the cytochrome P450 family. It depends on heme as a cofactor.

The protein localises to the endoplasmic reticulum membrane. It localises to the microsome membrane. Functionally, may be involved in the metabolism of insect hormones and in the breakdown of synthetic insecticides. The polypeptide is Probable cytochrome P450 6g2 (Cyp6g2) (Drosophila melanogaster (Fruit fly)).